The primary structure comprises 179 residues: Adenine phosphoribosyltransferase (179 aa).

Belongs to the purine/pyrimidine phosphoribosyltransferase family. In terms of assembly, homodimer.

It is found in the cytoplasm. It catalyses the reaction AMP + diphosphate = 5-phospho-alpha-D-ribose 1-diphosphate + adenine. It participates in purine metabolism; AMP biosynthesis via salvage pathway; AMP from adenine: step 1/1. Its function is as follows. Catalyzes a salvage reaction resulting in the formation of AMP, that is energically less costly than de novo synthesis. The polypeptide is Adenine phosphoribosyltransferase (Actinobacillus pleuropneumoniae serotype 5b (strain L20)).